The following is a 272-amino-acid chain: Undecaprenyl-diphosphatase (272 aa).

Helical transmembrane passes span S6–S26, A45–W65, T92–I112, L115–A135, Y189–L209, M225–L245, and I251–F271.

This sequence belongs to the UppP family.

The protein localises to the cell inner membrane. It carries out the reaction di-trans,octa-cis-undecaprenyl diphosphate + H2O = di-trans,octa-cis-undecaprenyl phosphate + phosphate + H(+). Its function is as follows. Catalyzes the dephosphorylation of undecaprenyl diphosphate (UPP). Confers resistance to bacitracin. This chain is Undecaprenyl-diphosphatase, found in Pectobacterium carotovorum subsp. carotovorum (strain PC1).